Reading from the N-terminus, the 153-residue chain is Small ribosomal subunit protein uS9 (153 aa).

Residues 122 to 153 form a disordered region; the sequence is KKAGFLTRDPRSTERKKYGLKKARKAPQYSKR. Positions 129–138 are enriched in basic and acidic residues; sequence RDPRSTERKK. The segment covering 139 to 153 has biased composition (basic residues); it reads YGLKKARKAPQYSKR.

This sequence belongs to the universal ribosomal protein uS9 family.

This chain is Small ribosomal subunit protein uS9 (rpsI), found in Mycobacterium leprae (strain TN).